Here is a 338-residue protein sequence, read N- to C-terminus: GTPase Obg (338 aa).

The 159-residue stretch at 1 to 159 (MKFLDKAIIH…RILRLELILI (159 aa)) folds into the Obg domain. Positions 160 to 333 (AHVGTLGLPN…IVKKIYDFLK (174 aa)) constitute an OBG-type G domain. GTP contacts are provided by residues 166–173 (GLPNSGKS), 191–195 (FTTLK), 213–216 (DIPG), 283–286 (NKID), and 314–316 (SAI). Mg(2+) contacts are provided by Ser173 and Thr193.

It belongs to the TRAFAC class OBG-HflX-like GTPase superfamily. OBG GTPase family. Monomer. Mg(2+) is required as a cofactor.

It localises to the cytoplasm. An essential GTPase which binds GTP, GDP and possibly (p)ppGpp with moderate affinity, with high nucleotide exchange rates and a fairly low GTP hydrolysis rate. Plays a role in control of the cell cycle, stress response, ribosome biogenesis and in those bacteria that undergo differentiation, in morphogenesis control. The polypeptide is GTPase Obg (Buchnera aphidicola subsp. Baizongia pistaciae (strain Bp)).